The chain runs to 161 residues: Nucleotide-binding protein XCV3791 (161 aa).

Belongs to the YajQ family.

Functionally, nucleotide-binding protein. The protein is Nucleotide-binding protein XCV3791 of Xanthomonas euvesicatoria pv. vesicatoria (strain 85-10) (Xanthomonas campestris pv. vesicatoria).